We begin with the raw amino-acid sequence, 294 residues long: Endonuclease 3 (294 aa).

Positions 1–24 (MGWSLRMWIVSILVLTQLVNGALC) are cleaved as a signal peptide. Residues Trp25 and His30 each contribute to the a divalent metal cation site. A substrate-binding site is contributed by 25–30 (WGDAGH). Cys34 and Cys65 are oxidised to a cystine. Asp69 and His84 together coordinate a divalent metal cation. Substrate-binding positions include 69–75 (DEIKKLP), 84–87 (HFAD), and 94–99 (NYEYSR). 3 disulfides stabilise this stretch: Cys93-Cys241, Cys101-Cys106, and Cys221-Cys228. Asn113 and Tyr131 together coordinate substrate. A glycan (N-linked (GlcNAc...) asparagine) is linked at Asn113. An N-linked (GlcNAc...) asparagine glycan is attached at Asn132. Residues His142, Asp146, His152, His176, and Asp180 each coordinate a divalent metal cation. The substrate binding stretch occupies residues 142–191 (HYMGDIHQPLHEGFIGDLGGNKIKVHWYNQETNLHRVWDDMIIESALETY). Residues Asn193, Asn224, and Asn247 are each glycosylated (N-linked (GlcNAc...) asparagine). Residues 279-294 (GTLNRIFSAKRKLARA) constitute a propeptide, removed in mature form.

Belongs to the nuclease type I family. In terms of assembly, monomer. The cofactor is Zn(2+). Mn(2+) is required as a cofactor.

It carries out the reaction Endonucleolytic cleavage to 5'-phosphomononucleotide and 5'-phosphooligonucleotide end-products.. In terms of biological role, endonuclease that can use RNA and single-stranded DNA as substrates. In contradiction with PubMed:23620482, cannot hydrolyze single-stranded DNA and does not cleave mismatches. The sequence is that of Endonuclease 3 from Arabidopsis thaliana (Mouse-ear cress).